A 594-amino-acid polypeptide reads, in one-letter code: Putative aldehyde oxidase Art an 7 (594 aa).

Positions Met1–Ala23 are cleaved as a signal peptide. A disordered region spans residues Thr28 to Asp56.

The N-terminus is blocked. Post-translationally, glycosylated. As to expression, expressed in pollen (at protein level).

It localises to the cytoplasm. The enzyme catalyses an aldehyde + O2 + H2O = a carboxylate + H2O2 + H(+). Its function is as follows. Catalyzes the oxidation of aldehydes to the corresponding carboxylate by coupling the reaction to the reduction of dioxygen to hydrogen peroxide. Substrates include glyoxal and other aldehydes. Does not have enzymatic activity on D-galactose. This is Putative aldehyde oxidase Art an 7 from Artemisia annua (Sweet wormwood).